A 169-amino-acid polypeptide reads, in one-letter code: Der GTPase-activating protein YihI (169 aa).

2 disordered regions span residues 1-100 and 144-169; these read MKPS…AELE and GLSYDDDEEEEEDEKQEDMMRLLRGN. The span at 10-19 shows a compositional bias: basic residues; sequence SKGHAKARRK. Basic and acidic residues predominate over residues 20–30; sequence TREELDQEARD. Residues 31–40 show a composition bias toward basic residues; the sequence is RKRQKKRRGH. Positions 49-58 are enriched in polar residues; sequence GNTSSGSKGQ. The segment covering 147-159 has biased composition (acidic residues); the sequence is YDDDEEEEEDEKQ. Residues 160 to 169 show a composition bias toward basic and acidic residues; sequence EDMMRLLRGN.

The protein belongs to the YihI family. In terms of assembly, interacts with Der.

Functionally, a GTPase-activating protein (GAP) that modifies Der/EngA GTPase function. May play a role in ribosome biogenesis. This Escherichia coli (strain SMS-3-5 / SECEC) protein is Der GTPase-activating protein YihI.